Consider the following 261-residue polypeptide: tRNA pseudouridine synthase A (261 aa).

The active-site Nucleophile is D51. Y109 provides a ligand contact to substrate.

It belongs to the tRNA pseudouridine synthase TruA family. As to quaternary structure, homodimer.

The catalysed reaction is uridine(38/39/40) in tRNA = pseudouridine(38/39/40) in tRNA. Functionally, formation of pseudouridine at positions 38, 39 and 40 in the anticodon stem and loop of transfer RNAs. This Shewanella pealeana (strain ATCC 700345 / ANG-SQ1) protein is tRNA pseudouridine synthase A.